The primary structure comprises 1439 residues: Histone-lysine N-methyltransferase NSD3 (1439 aa).

The segment at 121–151 (PHEILEKPSPPQPPPPPSVPQTVIPKKTGSP) is disordered. Residues 128–139 (PSPPQPPPPPSV) show a composition bias toward pro residues. The residue at position 150 (Ser150) is a Phosphoserine. A KIKL motif is present at residues 154-157 (KLKI). Positions 181-247 (QASEHTKSKH…PREEPVLKEA (67 aa)) are disordered. The span at 187 to 201 (KSKHESRKEKRKKSN) shows a compositional bias: basic residues. Over residues 202–244 (RHESSRSEERRSHKIPKLEPEGQNRPNERVDTAPEKPREEPVL) the composition is skewed to basic and acidic residues. Glycyl lysine isopeptide (Lys-Gly) (interchain with G-Cter in SUMO2) cross-links involve residues Lys218 and Lys245. A PWWP 1 domain is found at 270 to 333 (VGDLVWSKVG…EKRVREYKGH (64 aa)). 2 disordered regions span residues 344–367 (AKQA…ERAQ) and 401–466 (EASS…PPPV). Polar residues-rich tracts occupy residues 401-413 (EASS…VTSK) and 425-445 (VLNS…QSST). Lys413 participates in a covalent cross-link: Glycyl lysine isopeptide (Lys-Gly) (interchain with G-Cter in SUMO2). Residue Ser457 is modified to Phosphoserine. Residues Lys502 and Lys532 each participate in a glycyl lysine isopeptide (Lys-Gly) (interchain with G-Cter in SUMO2) cross-link. The interval 540–695 (QDRLIISSPS…VDSSLSRRGV (156 aa)) is disordered. A compositionally biased stretch (polar residues) spans 546–568 (SSPSQRSEKPAQSASSPEATSGS). Residues 583–595 (TRSESEKSAEVVP) are compositionally biased toward basic and acidic residues. Phosphoserine is present on residues Ser585, Ser587, and Ser590. A Glycyl lysine isopeptide (Lys-Gly) (interchain with G-Cter in SUMO2) cross-link involves residue Lys628. Over residues 637–648 (STDVETASCTYR) the composition is skewed to polar residues. Phosphoserine is present on Ser655. The span at 670–691 (DSPSATADADASDAQSVDSSLS) shows a compositional bias: low complexity. 3 consecutive PHD-type zinc fingers follow at residues 701-748 (DTVC…CETG), 749-805 (QHPC…CSME), and 862-955 (VGFC…CKAG). Position 790 is an N6-acetyllysine (Lys790). Residues 960–1025 (YKQIVWVKLG…QGRVFPYVEG (66 aa)) form the PWWP 2 domain. A coiled-coil region spans residues 1036–1065 (INKTFKKALEEAAKRFQELKAQRESKEALE). The AWS domain maps to 1096 to 1146 (SEIPRCNCKPGDENPCGLESQCLNRMSQYECHPQVCPAGDRCQNQCFTKRL). The 118-residue stretch at 1148–1265 (PDAEVIKTER…AGMELTFNYN (118 aa)) folds into the SET domain. Lys1154 participates in a covalent cross-link: Glycyl lysine isopeptide (Lys-Gly) (interchain with G-Cter in SUMO2). The 17-residue stretch at 1272 to 1288 (GRTVCHCGADNCSGFLG) folds into the Post-SET domain. A PHD-type 4; atypical zinc finger spans residues 1323–1370 (EDYCFQCGDGGELVMCDKKDCPKAYHLLCLNLTQPPHGKWECPWHRCD).

It belongs to the class V-like SAM-binding methyltransferase superfamily. Histone-lysine methyltransferase family. SET2 subfamily. Interacts with BRD4. Interacts (via KIKL motif) with BRD3 (via NET domain).

Its subcellular location is the nucleus. It localises to the chromosome. It carries out the reaction L-lysyl(4)-[histone H3] + 2 S-adenosyl-L-methionine = N(6),N(6)-dimethyl-L-lysyl(4)-[histone H3] + 2 S-adenosyl-L-homocysteine + 2 H(+). The catalysed reaction is L-lysyl(27)-[histone H3] + 2 S-adenosyl-L-methionine = N(6),N(6)-dimethyl-L-lysyl(27)-[histone H3] + 2 S-adenosyl-L-homocysteine + 2 H(+). Its function is as follows. Histone methyltransferase. Preferentially dimethylates 'Lys-4' and 'Lys-27' of histone H3 forming H3K4me2 and H3K27me2. H3 'Lys-4' methylation represents a specific tag for epigenetic transcriptional activation, while 'Lys-27' is a mark for transcriptional repression. This Mus musculus (Mouse) protein is Histone-lysine N-methyltransferase NSD3 (Nsd3).